Consider the following 294-residue polypeptide: ATP synthase gamma chain (294 aa).

Belongs to the ATPase gamma chain family. As to quaternary structure, F-type ATPases have 2 components, CF(1) - the catalytic core - and CF(0) - the membrane proton channel. CF(1) has five subunits: alpha(3), beta(3), gamma(1), delta(1), epsilon(1). CF(0) has three main subunits: a, b and c.

It is found in the cell inner membrane. Produces ATP from ADP in the presence of a proton gradient across the membrane. The gamma chain is believed to be important in regulating ATPase activity and the flow of protons through the CF(0) complex. In Rhizobium johnstonii (strain DSM 114642 / LMG 32736 / 3841) (Rhizobium leguminosarum bv. viciae), this protein is ATP synthase gamma chain.